Consider the following 450-residue polypeptide: Gluconate permease (450 aa).

The next 12 helical transmembrane spans lie at 6–26 (HDAY…VLIT), 30–50 (VHPF…SGMP), 60–80 (DGFG…TMLG), 116–136 (VGIP…VFIV), 142–162 (VSLI…HGLV), 183–203 (ILYG…LFGA), 233–253 (FGVT…KTFA), 269–289 (MIGH…YTFG), 312–332 (AIVM…ASGV), 338–358 (HLAV…AAVI), 366–386 (TVAT…IPGV), and 430–450 (AMET…SLVL).

The protein belongs to the GntP permease family.

Its subcellular location is the cell inner membrane. It participates in carbohydrate acid metabolism; D-gluconate degradation. The sequence is that of Gluconate permease (gnuT) from Pseudomonas aeruginosa (strain ATCC 15692 / DSM 22644 / CIP 104116 / JCM 14847 / LMG 12228 / 1C / PRS 101 / PAO1).